A 662-amino-acid polypeptide reads, in one-letter code: Primary amine oxidase 2 (662 aa).

The signal sequence occupies residues 1–22 (MSQLLLFTILVFSSVFVIGSLS). The N-linked (GlcNAc...) asparagine glycan is linked to Asn154. 321-332 (FFDCGEFGCGQY) contacts substrate. Asp323 serves as the catalytic Proton acceptor. A disulfide bridge links Cys342 with Cys368. 405 to 410 (VGNYDY) is a substrate binding site. The active-site Schiff-base intermediate with substrate; via topaquinone is the Tyr408. At Tyr408 the chain carries 2',4',5'-topaquinone. Cu cation is bound by residues His464 and His466. Asp473 and Asp475 together coordinate Mn(2+). Asn568 carries an N-linked (GlcNAc...) asparagine glycan. Mn(2+) is bound by residues Asp602 and Ile603. His613 provides a ligand contact to Cu cation.

The protein belongs to the copper/topaquinone oxidase family. Homodimer. It depends on Cu cation as a cofactor. Mn(2+) serves as cofactor. Requires L-topaquinone as cofactor. Topaquinone (TPQ) is generated by copper-dependent autoxidation of a specific tyrosyl residue.

It carries out the reaction a primary methyl amine + O2 + H2O = an aldehyde + H2O2 + NH4(+). The polypeptide is Primary amine oxidase 2 (Arabidopsis thaliana (Mouse-ear cress)).